Reading from the N-terminus, the 92-residue chain is uncharacterized protein (92 aa).

This is an uncharacterized protein from Sulfolobus spindle-shape virus 1 (SSV1).